The sequence spans 933 residues: Dual 3',5'-cyclic-AMP and -GMP phosphodiesterase 11A (933 aa).

Residues 42–121 (HTSGQGASSL…LQRRASQKEL (80 aa)) form a disordered region. Serine 162, serine 163, and serine 239 each carry phosphoserine. 2 consecutive GAF domains span residues 217-370 (DLTS…GIAI) and 402-558 (DLEK…GLGI). 3',5'-cyclic GMP is bound at residue serine 424. The PDEase domain maps to 588 to 912 (SKAEVDKFKA…RKWEELHQKR (325 aa)). Histidine 664 acts as the Proton donor in catalysis. A divalent metal cation is bound by residues histidine 668, histidine 704, aspartate 705, and aspartate 816. The disordered stretch occupies residues 913-933 (LQVSAASPDPASPMVAGEDRL).

The protein belongs to the cyclic nucleotide phosphodiesterase family. A divalent metal cation is required as a cofactor. In terms of tissue distribution, expressed in testis and developing spermatoza.

It localises to the cytoplasm. The protein resides in the cytosol. The catalysed reaction is 3',5'-cyclic GMP + H2O = GMP + H(+). It carries out the reaction 3',5'-cyclic AMP + H2O = AMP + H(+). With respect to regulation, inhibited by 3-isobutyl-1-methylxanthine (IBMX), zaprinast and dipyridamole. cGMP acts as an allosteric activator. Plays a role in signal transduction by regulating the intracellular concentration of cyclic nucleotides cAMP and cGMP. Catalyzes the hydrolysis of both cAMP and cGMP to 5'-AMP and 5'-GMP, respectively. In Mus musculus (Mouse), this protein is Dual 3',5'-cyclic-AMP and -GMP phosphodiesterase 11A (Pde11a).